The primary structure comprises 106 residues: Putative membrane protein insertion efficiency factor (106 aa).

This sequence belongs to the UPF0161 family.

The protein localises to the cell inner membrane. Functionally, could be involved in insertion of integral membrane proteins into the membrane. This is Putative membrane protein insertion efficiency factor from Methylacidiphilum infernorum (isolate V4) (Methylokorus infernorum (strain V4)).